The following is a 386-amino-acid chain: Methionine aminopeptidase 1 (386 aa).

N-acetylalanine is present on A2. The segment at 6–59 adopts a C6H2-type zinc-finger fold; it reads TRVCETDGCSSEAKLQCPTCIKLGIQGSYFCSQECFKGSWATHKLLHKKAKDEK. Residues C9, C14, C22, C25, C36, C40, H48, and H52 each contribute to the Zn(2+) site. H203 serves as a coordination point for a protein. Zn(2+)-binding residues include D220, D231, and H294. Position 301 (H301) interacts with a protein. Zn(2+) contacts are provided by E327 and E358.

This sequence belongs to the peptidase M24A family. Methionine aminopeptidase type 1 subfamily. Associates with the 60S ribosomal subunit of the 80S translational complex. Zn(2+) serves as cofactor. Requires Co(2+) as cofactor. It depends on Mn(2+) as a cofactor. Fe(2+) is required as a cofactor.

The protein resides in the cytoplasm. It catalyses the reaction Release of N-terminal amino acids, preferentially methionine, from peptides and arylamides.. In terms of biological role, cotranslationally removes the N-terminal methionine from nascent proteins. The N-terminal methionine is often cleaved when the second residue in the primary sequence is small and uncharged (Met-Ala-, Cys, Gly, Pro, Ser, Thr, or Val). Required for normal progression through the cell cycle. The sequence is that of Methionine aminopeptidase 1 (METAP1) from Homo sapiens (Human).